The primary structure comprises 61 residues: Large ribosomal subunit protein uL30 (61 aa).

Belongs to the universal ribosomal protein uL30 family. In terms of assembly, part of the 50S ribosomal subunit.

The protein is Large ribosomal subunit protein uL30 of Chlorobium phaeovibrioides (strain DSM 265 / 1930) (Prosthecochloris vibrioformis (strain DSM 265)).